Here is a 280-residue protein sequence, read N- to C-terminus: Dimethylglycine N-methyltransferase (280 aa).

Belongs to the methyltransferase superfamily. In terms of assembly, monomer.

It catalyses the reaction N,N-dimethylglycine + S-adenosyl-L-methionine = glycine betaine + S-adenosyl-L-homocysteine + H(+). The protein operates within amine and polyamine biosynthesis; betaine biosynthesis via glycine pathway; betaine from glycine: step 3/3. Functionally, catalyzes the methylation of dimethylglycine to betaine with S-adenosylmethionine (AdoMet) acting as the methyl donor. It has strict specificity for dimethylglycine as the methyl group acceptors. The protein is Dimethylglycine N-methyltransferase of Parasynechococcus marenigrum (strain WH8102).